Here is a 159-residue protein sequence, read N- to C-terminus: Regulatory protein RecX (159 aa).

The protein belongs to the RecX family.

It localises to the cytoplasm. Functionally, modulates RecA activity. This chain is Regulatory protein RecX, found in Acinetobacter baylyi (strain ATCC 33305 / BD413 / ADP1).